The chain runs to 493 residues: Serine/threonine-protein kinase 3 (493 aa).

Positions 26–277 constitute a Protein kinase domain; sequence FDVLEKLGEG…ATQLLQHPFI (252 aa). ATP-binding positions include 32–40 and Lys55; that span reads LGEGSYGSV. Asp145 functions as the Proton acceptor in the catalytic mechanism. Thr179 carries the post-translational modification Phosphothreonine; by autocatalysis. The stretch at 286 to 327 forms a coiled coil; that stretch reads LRDLITEAMDIKAKRHEELQRELEEEDENSEEDELDSHTMVK. Disordered regions lie at residues 303 to 336 and 369 to 414; these read ELQR…AGTM and DDEE…NCNQ. The segment covering 308-320 has biased composition (acidic residues); sequence LEEEDENSEEDEL. Positions 325-336 are enriched in polar residues; that stretch reads MVKTNSESAGTM. Over residues 369–378 the composition is skewed to acidic residues; it reads DDEEEEEEED. The span at 398 to 410 shows a compositional bias: basic and acidic residues; that stretch reads YFDKQDSKNKPHD. The 48-residue stretch at 439 to 486 folds into the SARAH domain; sequence FDFLKNLSFEELQMRLKALDPMMEREIEDLRQRYNAKRQPILDAMDAK. Residues 444–477 adopt a coiled-coil conformation; that stretch reads NLSFEELQMRLKALDPMMEREIEDLRQRYNAKRQ.

This sequence belongs to the protein kinase superfamily. STE Ser/Thr protein kinase family. STE20 subfamily. In terms of assembly, homodimer; mediated via the coiled-coil region. It depends on Mg(2+) as a cofactor.

Its subcellular location is the cytoplasm. The protein resides in the nucleus. The catalysed reaction is L-seryl-[protein] + ATP = O-phospho-L-seryl-[protein] + ADP + H(+). It carries out the reaction L-threonyl-[protein] + ATP = O-phospho-L-threonyl-[protein] + ADP + H(+). Inhibited by the C-terminal non-catalytic region. Activated by caspase-cleavage. Full activation also requires homodimerization and autophosphorylation of Thr-179. Functionally, stress-activated, pro-apoptotic kinase which, following caspase-cleavage, enters the nucleus and induces chromatin condensation followed by internucleosomal DNA fragmentation. Key component of the Hippo signaling pathway which plays a pivotal role in organ size control and tumor suppression by restricting proliferation and promoting apoptosis. The core of this pathway is composed of a kinase cascade wherein stk3/mst2 and stk4/mst1, in complex with its regulatory protein sav1, phosphorylates and activates lats1/2 in complex with its regulatory protein mob1, which in turn phosphorylates and inactivates yap1 oncoprotein and wwtr1/taz. Phosphorylation of yap1 by lats2 inhibits its translocation into the nucleus to regulate cellular genes important for cell proliferation, cell death, and cell migration. This Xenopus laevis (African clawed frog) protein is Serine/threonine-protein kinase 3 (stk3).